We begin with the raw amino-acid sequence, 207 residues long: Probable nicotinate-nucleotide adenylyltransferase (207 aa).

It belongs to the NadD family.

The catalysed reaction is nicotinate beta-D-ribonucleotide + ATP + H(+) = deamido-NAD(+) + diphosphate. It participates in cofactor biosynthesis; NAD(+) biosynthesis; deamido-NAD(+) from nicotinate D-ribonucleotide: step 1/1. Functionally, catalyzes the reversible adenylation of nicotinate mononucleotide (NaMN) to nicotinic acid adenine dinucleotide (NaAD). This is Probable nicotinate-nucleotide adenylyltransferase from Desulfitobacterium hafniense (strain Y51).